The following is a 126-amino-acid chain: Ribosome-binding factor A (126 aa).

It belongs to the RbfA family. Monomer. Binds 30S ribosomal subunits, but not 50S ribosomal subunits or 70S ribosomes.

It is found in the cytoplasm. In terms of biological role, one of several proteins that assist in the late maturation steps of the functional core of the 30S ribosomal subunit. Associates with free 30S ribosomal subunits (but not with 30S subunits that are part of 70S ribosomes or polysomes). Required for efficient processing of 16S rRNA. May interact with the 5'-terminal helix region of 16S rRNA. This is Ribosome-binding factor A from Halorhodospira halophila (strain DSM 244 / SL1) (Ectothiorhodospira halophila (strain DSM 244 / SL1)).